Reading from the N-terminus, the 31-residue chain is Phospholipase A2 homolog P-elapitoxin-Aa1a beta chain (31 aa).

It belongs to the phospholipase A2 family. Group I subfamily. In terms of assembly, heterotrimer of alpha, beta and gamma chains, each related to PLA2. In terms of tissue distribution, expressed by the venom gland.

It localises to the secreted. Its function is as follows. Heterotrimer: Snake venom phospholipase A2 (PLA2) that has presynaptic neurotoxicity. Inhibits nerve-evoked twitch contractions but not responses to cholinergic agonists acetylcholine and carbachol and to depolarizing agonist KCl. Causes a fade in tetanic contractions. Displays a triphasic mode of action with depression, enhancement and blockade of neurotransmission. Does not display myotoxic activity such as changes in baseline muscle tension or inhibition of directly stimulated muscle twitches. All subunits are necessary for maximum toxicity. In terms of biological role, monomer: The beta chain has no enzymatic activity and is not toxic by itself. This chain is Phospholipase A2 homolog P-elapitoxin-Aa1a beta chain, found in Acanthophis antarcticus (Common death adder).